The chain runs to 341 residues: Guanine nucleotide-binding protein subunit beta (341 aa).

WD repeat units follow at residues 54-84 (GHLA…IVWD), 96-126 (LRSS…SIYS), 142-171 (GHTG…ALWD), 183-213 (GHTG…KLWD), 225-255 (GHES…RLFD), 269-299 (NIIC…NVWD), and 311-341 (GHDN…KIWN).

It belongs to the WD repeat G protein beta family. In terms of assembly, g proteins are composed of 3 units, alpha, beta and gamma.

In terms of biological role, guanine nucleotide-binding proteins (G proteins) are involved as a modulator or transducer in various transmembrane signaling systems. The beta and gamma chains are required for the GTPase activity, for replacement of GDP by GTP, and for G protein-effector interaction. The sequence is that of Guanine nucleotide-binding protein subunit beta from Lymnaea stagnalis (Great pond snail).